The chain runs to 549 residues: Pyrophosphate--fructose 6-phosphate 1-phosphotransferase (549 aa).

Glycine 78 lines the diphosphate pocket. Aspartate 172 is a binding site for Mg(2+). Substrate contacts are provided by residues 200-202, 239-240, 247-249, glutamate 308, and 421-424; these read TID, KY, MGR, and YEGR. Aspartate 202 functions as the Proton acceptor in the catalytic mechanism.

The protein belongs to the phosphofructokinase type A (PFKA) family. PPi-dependent PFK group II subfamily. Clade 'Long' sub-subfamily. Homodimer. The cofactor is Mg(2+).

The protein resides in the cytoplasm. It catalyses the reaction beta-D-fructose 6-phosphate + diphosphate = beta-D-fructose 1,6-bisphosphate + phosphate + H(+). Its pathway is carbohydrate degradation; glycolysis; D-glyceraldehyde 3-phosphate and glycerone phosphate from D-glucose: step 3/4. Its activity is regulated as follows. Non-allosteric. Catalyzes the phosphorylation of D-fructose 6-phosphate, the first committing step of glycolysis. Uses inorganic phosphate (PPi) as phosphoryl donor instead of ATP like common ATP-dependent phosphofructokinases (ATP-PFKs), which renders the reaction reversible, and can thus function both in glycolysis and gluconeogenesis. Consistently, PPi-PFK can replace the enzymes of both the forward (ATP-PFK) and reverse (fructose-bisphosphatase (FBPase)) reactions. This chain is Pyrophosphate--fructose 6-phosphate 1-phosphotransferase, found in Porphyromonas gingivalis (Bacteroides gingivalis).